The primary structure comprises 337 residues: Holliday junction branch migration complex subunit RuvB (337 aa).

The interval 4–186 (ADRLIAADNP…FGIVQRLEYY (183 aa)) is large ATPase domain (RuvB-L). Residues Ile-25, Arg-26, Gly-67, Lys-70, Thr-71, Thr-72, 133 to 135 (EDY), Arg-176, Tyr-186, and Arg-223 each bind ATP. Thr-71 is a binding site for Mg(2+). The tract at residues 187 to 257 (KVDDLQYIVQ…IADKALNMLD (71 aa)) is small ATPAse domain (RuvB-S). The segment at 260–337 (VCGFDYMDRK…LHFGIDRPDK (78 aa)) is head domain (RuvB-H). Residues Arg-315 and Arg-320 each coordinate DNA.

The protein belongs to the RuvB family. As to quaternary structure, homohexamer. Forms an RuvA(8)-RuvB(12)-Holliday junction (HJ) complex. HJ DNA is sandwiched between 2 RuvA tetramers; dsDNA enters through RuvA and exits via RuvB. An RuvB hexamer assembles on each DNA strand where it exits the tetramer. Each RuvB hexamer is contacted by two RuvA subunits (via domain III) on 2 adjacent RuvB subunits; this complex drives branch migration. In the full resolvosome a probable DNA-RuvA(4)-RuvB(12)-RuvC(2) complex forms which resolves the HJ.

The protein localises to the cytoplasm. The enzyme catalyses ATP + H2O = ADP + phosphate + H(+). In terms of biological role, the RuvA-RuvB-RuvC complex processes Holliday junction (HJ) DNA during genetic recombination and DNA repair, while the RuvA-RuvB complex plays an important role in the rescue of blocked DNA replication forks via replication fork reversal (RFR). RuvA specifically binds to HJ cruciform DNA, conferring on it an open structure. The RuvB hexamer acts as an ATP-dependent pump, pulling dsDNA into and through the RuvAB complex. RuvB forms 2 homohexamers on either side of HJ DNA bound by 1 or 2 RuvA tetramers; 4 subunits per hexamer contact DNA at a time. Coordinated motions by a converter formed by DNA-disengaged RuvB subunits stimulates ATP hydrolysis and nucleotide exchange. Immobilization of the converter enables RuvB to convert the ATP-contained energy into a lever motion, pulling 2 nucleotides of DNA out of the RuvA tetramer per ATP hydrolyzed, thus driving DNA branch migration. The RuvB motors rotate together with the DNA substrate, which together with the progressing nucleotide cycle form the mechanistic basis for DNA recombination by continuous HJ branch migration. Branch migration allows RuvC to scan DNA until it finds its consensus sequence, where it cleaves and resolves cruciform DNA. The protein is Holliday junction branch migration complex subunit RuvB of Aliivibrio salmonicida (strain LFI1238) (Vibrio salmonicida (strain LFI1238)).